The following is a 410-amino-acid chain: MKNKGYPLRSSMDELSTKNDNEIDLEKGPLPEYNSEDGSTLPPYSEIWKYIKTVSEDSSTGPTETTNPNVERRQEFKDSHPNIYSLLRLLISVLAVIVVFFTAWVCVNPLEKSIFGKVAFFVTIGITCPILLITIFCFFETWTQAVAQCIKVTVIFLAQCVKVTAVFLAKCIKVTAVFLAKCVKVTAVFLAKCIKVTAVFLAKCVKVTAVFLAKCVKVIAVGLYNSKKDLVVTIWLAWVVICFILFGCVKDGRLNLNKALICSTCSISAALFFILLLVCIPIWTLKHMLFGLFQVLGVQSCVVIVTKGLMYLFDKHIDATGYEIEASSLFVIGNFLFFYEMERPGALKRMPKFIGNGIASFLGGLGNAFGGIGNAFGGIGNAIGRIGNAFRGANDNNDIPLGEMDVESEV.

The interval 1 to 39 is disordered; it reads MKNKGYPLRSSMDELSTKNDNEIDLEKGPLPEYNSEDGS. Positions 11-29 are enriched in basic and acidic residues; sequence SMDELSTKNDNEIDLEKGP. A run of 10 helical transmembrane segments spans residues 89–109, 119–139, 149–169, 174–194, 204–224, 229–249, 265–285, 289–309, 319–339, and 353–373; these read LLISVLAVIVVFFTAWVCVNP, AFFVTIGITCPILLITIFCFF, CIKVTVIFLAQCVKVTAVFLA, VTAVFLAKCVKVTAVFLAKCI, CVKVTAVFLAKCVKVIAVGLY, DLVVTIWLAWVVICFILFGCV, CSISAALFFILLLVCIPIWTL, LFGLFQVLGVQSCVVIVTKGL, ATGYEIEASSLFVIGNFLFFY, and FIGNGIASFLGGLGNAFGGIG.

It belongs to the WTF family. Homomer. Forms protein aggregates. The two isoforms can interact with each other and with themselves. High sequence similarity is required for their interaction.

The protein resides in the spore membrane. The protein localises to the vacuole membrane. It localises to the ascus epiplasm. It is found in the cytoplasm. Its subcellular location is the endoplasmic reticulum membrane. Its function is as follows. Promotes unequal transmission of alleles from the parental zygote to progeny spores by acting as poison/antidote system where the poison and antidote proteins are produced from the same locus; the poison component is trans-acting and targets all spores within an ascus whereas the antidote component is spore-specific, leading to poisoning of all progeny that do not inherit the allele. Localizes isoform 2 to the vacuole thereby facilitating its degradation. In addition to suppressing isoform 2, also suppresses S.pombe strain 972 wtf13 isoform 2. In terms of biological role, forms toxic aggregates that disrupt spore maturation. The sequence is that of Meiotic driver wtf18 from Schizosaccharomyces pombe (Fission yeast).